The primary structure comprises 563 residues: Proton channel OTOP2 (563 aa).

The segment at 1–20 is disordered; it reads MSEELVPHPNESLPGPRASP. A run of 12 helical transmembrane segments spans residues 30-50, 62-82, 100-120, 137-157, 173-193, 242-262, 290-310, 325-345, 373-393, 403-423, 496-516, and 528-548; these read LLSV…ISGG, VFAL…FYLL, PIWL…MDVF, ILHP…LWIS, LMFT…DESV, FYLY…LYVM, FFAG…VFIL, ALVI…LVSL, LMGA…AVVV, LNLS…VFII, DISL…AFGA, and FYGY…GIFY.

This sequence belongs to the otopetrin family. In terms of tissue distribution, expressed at higher level in stomach, testis and olfactory bulb.

The protein localises to the cell membrane. The catalysed reaction is H(+)(in) = H(+)(out). Its activity is regulated as follows. Actives at neutral and alkaline extracellular pH, acid extracellular pH appears to inhibit the channel. Insensitive to activation by Zn(2+). In terms of biological role, proton-selective ion channel open at neutral pH. Actives at neutral and alkaline extracellular pH, likely participates in some alkali-related physiological activities. The chain is Proton channel OTOP2 from Mus musculus (Mouse).